Consider the following 594-residue polypeptide: MKNIRNFSIIAHIDHGKSTLSDRFIQVCNGLSEREMKEQVLDSMDIERERGITIKAQSVTLDYTARDGQTYQLNFIDTPGHVDFSYEVSRSLAACEGALLVVDAAQGVEAQTVANCYTAIEQNLEVIPILNKIDLPSAEPDRVAQEIEEIIGIDATGATTCSAKIGIGVEDVLETIVAKVPAPEGDVNAKLQALIIDSWFDNYLGVVSLVRVKNGTIKKGEKFKVMSTGVAYQVDRLGVFTPKMKDLDHLKAGEVGFIVAGIKDIHGAPVGDTLTHAHNPTDKPVPGFKKVQPQVYAGMFTISSDDYPDFREALEKLSLNDASLFFEPEVSQALGFGFRCGFLGMLHMEIIQERLEREYNLDLITSAPTVVYKAIKKDGEIIEVDNLSKLPEPGAIAEIQEPIVRANILVPKDYVGSVITICIEKRGVQVDLNYVGNQVSITYDLPMIEVVSDFFDTLKSVTKGYGSLDYELIRYEPANMVCLDVLINGDKVDALASIVHKDQAKYKGRELVERLKELIPRQMFEVAIQAAIGGTIVARSTVKALRKNVLAKCYGGDVSRKKKLLEKQKEGKKRMKNIGSVEIPQEAFLSVLKK.

One can recognise a tr-type G domain in the interval 2–184 (KNIRNFSIIA…TIVAKVPAPE (183 aa)). Residues 14 to 19 (DHGKST) and 131 to 134 (NKID) each bind GTP.

Belongs to the TRAFAC class translation factor GTPase superfamily. Classic translation factor GTPase family. LepA subfamily.

It is found in the cell inner membrane. The enzyme catalyses GTP + H2O = GDP + phosphate + H(+). Its function is as follows. Required for accurate and efficient protein synthesis under certain stress conditions. May act as a fidelity factor of the translation reaction, by catalyzing a one-codon backward translocation of tRNAs on improperly translocated ribosomes. Back-translocation proceeds from a post-translocation (POST) complex to a pre-translocation (PRE) complex, thus giving elongation factor G a second chance to translocate the tRNAs correctly. Binds to ribosomes in a GTP-dependent manner. This Francisella tularensis subsp. tularensis (strain FSC 198) protein is Elongation factor 4.